We begin with the raw amino-acid sequence, 281 residues long: Pantothenate synthetase (281 aa).

30 to 37 (MGYLHEGH) provides a ligand contact to ATP. His-37 serves as the catalytic Proton donor. Residue Gln-61 participates in (R)-pantoate binding. Position 61 (Gln-61) interacts with beta-alanine. 147–150 (GEKD) lines the ATP pocket. Gln-153 contributes to the (R)-pantoate binding site. Residues Ile-176 and 184–187 (KSSR) contribute to the ATP site.

The protein belongs to the pantothenate synthetase family. In terms of assembly, homodimer.

It localises to the cytoplasm. It catalyses the reaction (R)-pantoate + beta-alanine + ATP = (R)-pantothenate + AMP + diphosphate + H(+). It participates in cofactor biosynthesis; (R)-pantothenate biosynthesis; (R)-pantothenate from (R)-pantoate and beta-alanine: step 1/1. Catalyzes the condensation of pantoate with beta-alanine in an ATP-dependent reaction via a pantoyl-adenylate intermediate. This is Pantothenate synthetase from Clostridium botulinum (strain Kyoto / Type A2).